Consider the following 475-residue polypeptide: Protein nucleotidyltransferase YdiU (475 aa).

The ATP site is built by Gly-82, Gly-84, Arg-85, Lys-105, Asp-117, Gly-118, Arg-168, and Arg-175. Asp-240 (proton acceptor) is an active-site residue. Mg(2+) contacts are provided by Asn-241 and Asp-250. ATP is bound at residue Asp-250.

This sequence belongs to the SELO family. Mg(2+) serves as cofactor. The cofactor is Mn(2+).

The catalysed reaction is L-seryl-[protein] + ATP = 3-O-(5'-adenylyl)-L-seryl-[protein] + diphosphate. It catalyses the reaction L-threonyl-[protein] + ATP = 3-O-(5'-adenylyl)-L-threonyl-[protein] + diphosphate. It carries out the reaction L-tyrosyl-[protein] + ATP = O-(5'-adenylyl)-L-tyrosyl-[protein] + diphosphate. The enzyme catalyses L-histidyl-[protein] + UTP = N(tele)-(5'-uridylyl)-L-histidyl-[protein] + diphosphate. The catalysed reaction is L-seryl-[protein] + UTP = O-(5'-uridylyl)-L-seryl-[protein] + diphosphate. It catalyses the reaction L-tyrosyl-[protein] + UTP = O-(5'-uridylyl)-L-tyrosyl-[protein] + diphosphate. Nucleotidyltransferase involved in the post-translational modification of proteins. It can catalyze the addition of adenosine monophosphate (AMP) or uridine monophosphate (UMP) to a protein, resulting in modifications known as AMPylation and UMPylation. This Aeromonas salmonicida (strain A449) protein is Protein nucleotidyltransferase YdiU.